Consider the following 1216-residue polypeptide: ATP-dependent helicase/nuclease subunit A (1216 aa).

The region spanning 26–488 (QKKTAEQIEA…IILKENFRSS (463 aa)) is the UvrD-like helicase ATP-binding domain. 47 to 54 (ASAGSGKT) contacts ATP. Residues 515 to 802 (KHQLVFANTK…ELMTIHKSKG (288 aa)) form the UvrD-like helicase C-terminal domain.

This sequence belongs to the helicase family. AddA subfamily. Heterodimer of AddA and AddB/RexB. It depends on Mg(2+) as a cofactor.

It carries out the reaction Couples ATP hydrolysis with the unwinding of duplex DNA by translocating in the 3'-5' direction.. It catalyses the reaction ATP + H2O = ADP + phosphate + H(+). The heterodimer acts as both an ATP-dependent DNA helicase and an ATP-dependent, dual-direction single-stranded exonuclease. Recognizes the chi site generating a DNA molecule suitable for the initiation of homologous recombination. The AddA nuclease domain is required for chi fragment generation; this subunit has the helicase and 3' -&gt; 5' nuclease activities. This Streptococcus pneumoniae serotype 2 (strain D39 / NCTC 7466) protein is ATP-dependent helicase/nuclease subunit A.